We begin with the raw amino-acid sequence, 486 residues long: Bifunctional protein HldE (486 aa).

Positions 1-329 (MSSRLSGLLD…AALSVAGPVG (329 aa)) are ribokinase. 204–207 (NAFE) contacts ATP. Aspartate 274 is a catalytic residue. The tract at residues 355-486 (FTNGCFDILH…AIIARSETGK (132 aa)) is cytidylyltransferase.

This sequence in the N-terminal section; belongs to the carbohydrate kinase PfkB family. The protein in the C-terminal section; belongs to the cytidylyltransferase family. In terms of assembly, homodimer.

The catalysed reaction is D-glycero-beta-D-manno-heptose 7-phosphate + ATP = D-glycero-beta-D-manno-heptose 1,7-bisphosphate + ADP + H(+). The enzyme catalyses D-glycero-beta-D-manno-heptose 1-phosphate + ATP + H(+) = ADP-D-glycero-beta-D-manno-heptose + diphosphate. The protein operates within nucleotide-sugar biosynthesis; ADP-L-glycero-beta-D-manno-heptose biosynthesis; ADP-L-glycero-beta-D-manno-heptose from D-glycero-beta-D-manno-heptose 7-phosphate: step 1/4. It functions in the pathway nucleotide-sugar biosynthesis; ADP-L-glycero-beta-D-manno-heptose biosynthesis; ADP-L-glycero-beta-D-manno-heptose from D-glycero-beta-D-manno-heptose 7-phosphate: step 3/4. Functionally, catalyzes the phosphorylation of D-glycero-D-manno-heptose 7-phosphate at the C-1 position to selectively form D-glycero-beta-D-manno-heptose-1,7-bisphosphate. In terms of biological role, catalyzes the ADP transfer from ATP to D-glycero-beta-D-manno-heptose 1-phosphate, yielding ADP-D-glycero-beta-D-manno-heptose. The polypeptide is Bifunctional protein HldE (Hyphomonas neptunium (strain ATCC 15444)).